Here is a 1181-residue protein sequence, read N- to C-terminus: DNA-directed RNA polymerase subunit beta' (1181 aa).

The Zn(2+) site is built by Cys-68, Cys-70, Cys-83, and Cys-86. 3 residues coordinate Mg(2+): Asp-457, Asp-459, and Asp-461. 4 residues coordinate Zn(2+): Cys-802, Cys-876, Cys-883, and Cys-886.

The protein belongs to the RNA polymerase beta' chain family. In terms of assembly, the RNAP catalytic core consists of 2 alpha, 1 beta, 1 beta' and 1 omega subunit. When a sigma factor is associated with the core the holoenzyme is formed, which can initiate transcription. It depends on Mg(2+) as a cofactor. Zn(2+) is required as a cofactor.

The enzyme catalyses RNA(n) + a ribonucleoside 5'-triphosphate = RNA(n+1) + diphosphate. In terms of biological role, DNA-dependent RNA polymerase catalyzes the transcription of DNA into RNA using the four ribonucleoside triphosphates as substrates. The chain is DNA-directed RNA polymerase subunit beta' from Syntrophomonas wolfei subsp. wolfei (strain DSM 2245B / Goettingen).